The primary structure comprises 401 residues: Argininosuccinate synthase (401 aa).

An ATP-binding site is contributed by 8 to 16 (AYSGGLDTT). Tyr87 serves as a coordination point for L-citrulline. An ATP-binding site is contributed by Gly117. L-aspartate is bound by residues Thr119, Asn123, and Asp124. Residue Asn123 participates in L-citrulline binding. L-citrulline-binding residues include Arg127, Ser175, Glu259, and Tyr271.

Belongs to the argininosuccinate synthase family. Type 1 subfamily. As to quaternary structure, homotetramer.

The protein resides in the cytoplasm. It catalyses the reaction L-citrulline + L-aspartate + ATP = 2-(N(omega)-L-arginino)succinate + AMP + diphosphate + H(+). It participates in amino-acid biosynthesis; L-arginine biosynthesis; L-arginine from L-ornithine and carbamoyl phosphate: step 2/3. The polypeptide is Argininosuccinate synthase (Corynebacterium glutamicum (strain ATCC 13032 / DSM 20300 / JCM 1318 / BCRC 11384 / CCUG 27702 / LMG 3730 / NBRC 12168 / NCIMB 10025 / NRRL B-2784 / 534)).